A 296-amino-acid chain; its full sequence is Nucleotide-binding protein SPCG_1551 (296 aa).

An ATP-binding site is contributed by 13 to 20; the sequence is GMSGAGKT. 63 to 66 provides a ligand contact to GTP; the sequence is DMRS.

It belongs to the RapZ-like family.

Its function is as follows. Displays ATPase and GTPase activities. This Streptococcus pneumoniae (strain CGSP14) protein is Nucleotide-binding protein SPCG_1551.